The chain runs to 598 residues: Transcription factor himD (598 aa).

The zn(2)-C6 fungal-type DNA-binding region spans 18–47 (CQNCARAKIRCIRSVPTGSCDRCERLRKTC). The segment at 87 to 110 (TVSEASIDDKSPTTTPTTPRPPPD) is disordered.

It localises to the nucleus. In terms of biological role, transcription factor that, with himB, probably co-regulates the him gene cluster that mediates the biosynthesis of himeic acid A, a ubiquitin-activating enzyme (E1) inhibitor. In Aspergillus japonicus, this protein is Transcription factor himD.